We begin with the raw amino-acid sequence, 463 residues long: Phytase A (463 aa).

Positions 1–19 are cleaved as a signal peptide; that stretch reads MAFFTVALSLYYLLSRVST. N26 carries N-linked (GlcNAc...) asparagine glycosylation. A disulfide bridge links C29 with C38. The N-linked (GlcNAc...) asparagine glycan is linked to N41. 6 residues coordinate 1D-myo-inositol hexakisphosphate: Q48, Y49, R79, H80, R83, and T86. 4 disulfide bridges follow: C69–C410, C211–C460, C260–C278, and C431–C439. The Nucleophile role is filled by H80. Residues N103 and N118 are each glycosylated (N-linked (GlcNAc...) asparagine). Residue R163 coordinates 1D-myo-inositol hexakisphosphate. N203 carries N-linked (GlcNAc...) asparagine glycosylation. D207 serves as a coordination point for 1D-myo-inositol hexakisphosphate. N-linked (GlcNAc...) asparagine glycosylation is present at N226. A 1D-myo-inositol hexakisphosphate-binding site is contributed by K297. 2 N-linked (GlcNAc...) asparagine glycosylation sites follow: N331 and N335. Positions 357 and 358 each coordinate 1D-myo-inositol hexakisphosphate. A glycan (N-linked (GlcNAc...) asparagine) is linked at N372.

The protein belongs to the histidine acid phosphatase family. Monomer. Post-translationally, seems to be cleaved into at least two pieces, most likely due to proteases in the supernatant. The N-terminal fragment, called phyB seems to retain phytase activity.

It is found in the secreted. The enzyme catalyses 1D-myo-inositol hexakisphosphate + H2O = 1D-myo-inositol 1,2,4,5,6-pentakisphosphate + phosphate. It carries out the reaction 1D-myo-inositol 1,2,4,5,6-pentakisphosphate + H2O = 1D-myo-inositol 1,2,5,6-tetrakisphosphate + phosphate. The catalysed reaction is 1D-myo-inositol 1,2,5,6-tetrakisphosphate + H2O = 1D-myo-inositol 1,2,6-trisphosphate + phosphate. It catalyses the reaction 1D-myo-inositol 1,2,6-trisphosphate + H2O = 1D-myo-inositol 1,2-bisphosphate + phosphate. The enzyme catalyses 1D-myo-inositol 1,2-bisphosphate + H2O = 1D-myo-inositol 2-phosphate + phosphate. Its function is as follows. Catalyzes the phosphate monoester hydrolysis of phytic acid (myo-inositol hexakisphosphate), which results in the stepwise formation of myo-inositol pentakis-, tetrakis-, tris-, bis-, and monophosphates, as well as the liberation of inorganic phosphate. Myo-inositol 2-monophosphate is the end product. Has a broad substrate specificity and is also able to dephosphorylate other classic acid phosphatase substrates such as p-nitrophenyl phosphate, phenyl phosphate, fructose 1,6-bisphosphate, fructose 6-phosphate, glucose 6-phosphate, ribose 5-phosphate, alpha-glycerophosphate, beta-glycerophosphate, 3-phosphoglycerate, as well as ADP and ATP. In Emericella nidulans (strain FGSC A4 / ATCC 38163 / CBS 112.46 / NRRL 194 / M139) (Aspergillus nidulans), this protein is Phytase A.